Reading from the N-terminus, the 65-residue chain is Large ribosomal subunit protein bL35 (65 aa).

This sequence belongs to the bacterial ribosomal protein bL35 family.

The chain is Large ribosomal subunit protein bL35 from Borrelia duttonii (strain Ly).